Reading from the N-terminus, the 462-residue chain is Transcription initiation factor TFIID subunit 7-like (462 aa).

Disordered regions lie at residues 1–97 (MECP…VPDE) and 327–366 (DSRS…SEEY). Low complexity-rich tracts occupy residues 16 to 30 (STPT…SQQE) and 66 to 77 (DADSSAQAAAQA). Residues 333-365 (DDDEDEDDEDEDEDEDEDEDEDKEEEEEDCSEE) are compositionally biased toward acidic residues. A coiled-coil region spans residues 342 to 462 (DEDEDEDEDE…QEQLQRFLKK (121 aa)).

Belongs to the TAF7 family. As to quaternary structure, TFIID is composed of TATA binding protein (TBP) and a number of TBP-associated factors (TAFs). TAF7L may replace TAF7 in a spermatogenesis-specific form of TFIID. Interacts with TBP; the interaction occurs in a sub-population of cells (pachytene and haploid round spermatids) and is developmentally regulated through differential intracellular localization of the two proteins. Interacts with TAF1. As to expression, testis-specific.

Its subcellular location is the nucleus. It localises to the cytoplasm. In terms of biological role, probably functions as a spermatogenesis-specific component of the DNA-binding general transcription factor complex TFIID, a multimeric protein complex that plays a central role in mediating promoter responses to various activators and repressors. May play a role in spermatogenesis. This Homo sapiens (Human) protein is Transcription initiation factor TFIID subunit 7-like (TAF7L).